The sequence spans 695 residues: MSSKFNFSLRRKEKREFRNIAHGLIPAATIAPRPAVPRTPPPRSPNPSPERPRSALAAAILSSSLTGRTVAIPSPRQRSYSESDCSRADSQADFEPYATALYTRDRWPGSVTGRPPVPSPGRTDEDDDEDDEGNDIDELEGLEGDEDHVYQSLERQSRADDINVVYAVPLKHKKSEIDSDVDEETEDSAFDIVSPLQTEEETVVPEGAGQTQPSSLPQPRSVSRRSMASPELDDWSSPRSLKTSKRKSSRTNKESPVRVNERDRSSEDSEVLRSTLEVQHALVKELKEQNQILSQEKETLEKRCLQQSQHMKHLQQELCHTHRERGNSTGEGSELSSLRQQAQELVDENDGLKMTVHRLNVELSRYQARFRPLTKDENAQLKGLPVKGPAPPWLLDMKYLSPLLLAYEDHLNAKDKLLKSCEEELQSLRVRAEEVIQENEKLHTQVSKSSTVSNKEWRQLQEQARLVLEENQVLIEQLELQHAKAKEAHSKHAQEVCKVSKKVMLLEAEKQSLEKELEVERKEHRALKTEFQRVRLALEHSLSLAEHQTVTDKLKRQLQDHEKVKTCEVEDLQVRLSALEVERKTLLLDKTNLNTHIKHLETELQLSQQANRKAQRRVSVLKQQVEDSLEKELIAHQYLANIVTLAEKTTHERDQLMLMASTLEKDKQGVLTRIIESTVNLGKLQEKVKVFLLQS.

3 disordered regions span residues 24 to 54 (LIPA…RPRS), 66 to 147 (TGRT…GDED), and 167 to 272 (AVPL…SEVL). Positions 34–49 (PAVPRTPPPRSPNPSP) are enriched in pro residues. 2 stretches are compositionally biased toward acidic residues: residues 124 to 146 (DEDD…EGDE) and 178 to 189 (DSDVDEETEDSA). A compositionally biased stretch (polar residues) spans 209–226 (GQTQPSSLPQPRSVSRRS). Residues 251–271 (TNKESPVRVNERDRSSEDSEV) show a composition bias toward basic and acidic residues. Coiled-coil stretches lie at residues 276-368 (LEVQ…RYQA) and 406-632 (AYED…LEKE).

It is found in the cytoplasm. It localises to the cytosol. The protein resides in the cytoskeleton. Its subcellular location is the microtubule organizing center. The protein localises to the centrosome. It is found in the spindle pole. It localises to the centriole. The protein resides in the mitochondrion intermembrane space. In terms of biological role, required for ciliogenesis. Also plays a role in mitochondrial metabolism where it may modulate complex IV activity. The protein is Centrosomal protein of 89 kDa (cep89) of Danio rerio (Zebrafish).